A 1003-amino-acid polypeptide reads, in one-letter code: Anoctamin-2 (1003 aa).

Residues 1–68 (MATPGPRDIP…PCGGESTRSS (68 aa)) form a disordered region. Over 1-365 (MATPGPRDIP…FGEKIGLYFA (365 aa)) the chain is Cytoplasmic. Low complexity predominate over residues 10 to 21 (PLLPGSPRRLSP). The helical transmembrane segment at 366–386 (WLGLYTSFLIPSSVIGVIVFL) threads the bilayer. At 387-434 (YGCATIEEDIPSREMCDQQNAFTMCPLCDKSCDYWNLSSACGTAQASH) the chain is on the extracellular side. Asparagine 422 is a glycosylation site (N-linked (GlcNAc...) asparagine). Residues 435–455 (LFDNPATVFFSIFMALWATMF) traverse the membrane as a helical segment. Over 456–538 (LENWKRLQMR…KDRFPGYLMN (83 aa)) the chain is Cytoplasmic. Residues 539 to 559 (FASILFMIALTFSIVFGVIVY) form a helical membrane-spanning segment. The Extracellular portion of the chain corresponds to 560-582 (RITTAAALSLNKATRSNVRVTVT). The chain crosses the membrane as a helical span at residues 583–603 (ATAVIINLVVILILDEIYGAV). Residues 604-623 (AKWLTKIEVPKTEQTFEERL) are Cytoplasmic-facing. A helical membrane pass occupies residues 624 to 644 (ILKAFLLKFVNAYSPIFYVAF). Residues 645–748 (FKGRFVGRPG…YTGLTPEYME (104 aa)) lie on the Extracellular side of the membrane. Residues 749-769 (MIIQFGFVTLFVASFPLAPVF) form a helical membrane-spanning segment. The Cytoplasmic segment spans residues 770–801 (ALLNNVIEVRLDAKKFVTELRRPDAVRTKDIG). A helical transmembrane segment spans residues 802-822 (IWFDILSGIGKFSVISNAFVI). Residues 823–907 (AITSDFIPRL…QYWFILSARL (85 aa)) lie on the Extracellular side of the membrane. N-linked (GlcNAc...) asparagine glycosylation is found at asparagine 841, asparagine 849, and asparagine 856. A helical transmembrane segment spans residues 908–928 (AFVIIFQNLVMFLSVLVDWMI). The Cytoplasmic segment spans residues 929–1003 (PDIPTDISDQ…MSSGSQHTNV (75 aa)). A disordered region spans residues 961–1003 (MDEPALRSPGGGDRSRSRAASSAPSGQSQLGSMMSSGSQHTNV). The span at 978-1003 (RAASSAPSGQSQLGSMMSSGSQHTNV) shows a compositional bias: low complexity. A DLG4 binding (PDZ) motif is present at residues 1001–1003 (TNV).

The protein belongs to the anoctamin family. Homodimer. Component of a presynaptic protein complex recruited to specialized plasma membrane domains of photoreceptors. Interacts with DLG4 by its C-terminal region. Retina, especially in the photoreceptor synaptic terminals.

The protein localises to the cell membrane. It catalyses the reaction chloride(in) = chloride(out). With respect to regulation, channel activity is repressed by chloride inhibitors; strongly by niflumic acid (NFA), partially by flufenamic acid (FFA), and only slightly by meclofenamic acid (MFA), 5-Nitro-2-(3-phenylpropylamino)benzoic acid (NPPB), 4-acetamido-4'-isothiocyanato-stilben-2,2'-disulfonate (SITS), and 4,4'-diisothiocyanatostilbene-2,2'-disulfonic acid (DIDS). In terms of biological role, calcium-activated chloride channel (CaCC) which may play a role in olfactory signal transduction. Odorant molecules bind to odor-sensing receptors (OSRs), leading to an increase in calcium entry that activates CaCC current which amplifies the depolarization of the OSR cells, ANO2 seems to be the underlying chloride channel involved in this process. May mediate light perception amplification in retina. This chain is Anoctamin-2 (ANO2), found in Homo sapiens (Human).